Here is a 190-residue protein sequence, read N- to C-terminus: Imidazoleglycerol-phosphate dehydratase (190 aa).

It belongs to the imidazoleglycerol-phosphate dehydratase family.

The protein localises to the cytoplasm. It carries out the reaction D-erythro-1-(imidazol-4-yl)glycerol 3-phosphate = 3-(imidazol-4-yl)-2-oxopropyl phosphate + H2O. The protein operates within amino-acid biosynthesis; L-histidine biosynthesis; L-histidine from 5-phospho-alpha-D-ribose 1-diphosphate: step 6/9. The protein is Imidazoleglycerol-phosphate dehydratase of Methanococcus vannielii (strain ATCC 35089 / DSM 1224 / JCM 13029 / OCM 148 / SB).